The primary structure comprises 197 residues: TLE family member 5 (197 aa).

The interval 166–197 (LSALGSQAHLSKEDKNGHDGDTHQEDDGEKSD) is CCN domain. The interval 174-197 (HLSKEDKNGHDGDTHQEDDGEKSD) is disordered. Over residues 175–197 (LSKEDKNGHDGDTHQEDDGEKSD) the composition is skewed to basic and acidic residues. Ser196 is modified (phosphoserine).

Belongs to the WD repeat Groucho/TLE family. In terms of assembly, homooligomer and heterooligomer with other family members. Binds TCF7. Binds the NF-kappa-B subunit RELA. Interacts with PHF12. Interacts (via Q domain) with SIX3. Interacts with SIX6. Post-translationally, ubiquitinated by XIAP/BIRC4. Found predominantly in muscle, heart and Placenta. In fetal tissues, abundantly expressed in the heart, lung, kidney, brain and liver.

The protein localises to the nucleus. In terms of biological role, transcriptional corepressor. Acts as a dominant repressor towards other family members. Inhibits NF-kappa-B-regulated gene expression. May be required for the initiation and maintenance of the differentiated state. Essential for the transcriptional repressor activity of SIX3 during retina and lens development. The polypeptide is TLE family member 5 (Homo sapiens (Human)).